Reading from the N-terminus, the 542-residue chain is CTP synthase (542 aa).

Positions 1 to 265 are amidoligase domain; the sequence is MTRYIFITGG…DDEVLSVFGI (265 aa). CTP is bound at residue S13. S13 contributes to the UTP binding site. ATP-binding positions include 14–19 and D71; that span reads SLGKGL. Residues D71 and E139 each contribute to the Mg(2+) site. CTP contacts are provided by residues 146–148, 186–191, and K222; these read DIE and KTKPTQ. UTP is bound by residues 186–191 and K222; that span reads KTKPTQ. One can recognise a Glutamine amidotransferase type-1 domain in the interval 291–541; the sequence is TIAIVGKYTG…VEAAVEQSRL (251 aa). An L-glutamine-binding site is contributed by G353. C380 serves as the catalytic Nucleophile; for glutamine hydrolysis. Residues 381–384, E404, and R469 contribute to the L-glutamine site; that span reads FGMQ. Active-site residues include H514 and E516.

It belongs to the CTP synthase family. As to quaternary structure, homotetramer.

The catalysed reaction is UTP + L-glutamine + ATP + H2O = CTP + L-glutamate + ADP + phosphate + 2 H(+). The enzyme catalyses L-glutamine + H2O = L-glutamate + NH4(+). It catalyses the reaction UTP + NH4(+) + ATP = CTP + ADP + phosphate + 2 H(+). It participates in pyrimidine metabolism; CTP biosynthesis via de novo pathway; CTP from UDP: step 2/2. With respect to regulation, allosterically activated by GTP, when glutamine is the substrate; GTP has no effect on the reaction when ammonia is the substrate. The allosteric effector GTP functions by stabilizing the protein conformation that binds the tetrahedral intermediate(s) formed during glutamine hydrolysis. Inhibited by the product CTP, via allosteric rather than competitive inhibition. Catalyzes the ATP-dependent amination of UTP to CTP with either L-glutamine or ammonia as the source of nitrogen. Regulates intracellular CTP levels through interactions with the four ribonucleotide triphosphates. This is CTP synthase from Parvibaculum lavamentivorans (strain DS-1 / DSM 13023 / NCIMB 13966).